The primary structure comprises 851 residues: MAKANVSPGMQQYLDIKKDYPDAFLLFRMGDFYELFYEDAVKAAQILEIGLTSRNKNADNPIPMAGVPYHSVQQYIDVLIDLGHKVAIAEQMEDPKQAVGVVKREVVQVITPGTAVDSSRPDSPNNFLVAVDFDGKAYGLSYMDVSTGEFFATDLADFASVKSEIQNLKAKEVLLGFELSEEEQAILVKQLNLLLSFEMTALEDSPLIDHQLTAVELSAAGKLLHYVHQTQLRELSHLQALVHYDIKDYLQMSYATKSSLDLLENARTGKKHGSLYWLLDETKTAMGMRLLRAWIDRPLVTSEAILERQEIIQVFLNAFIERTDLSDSLKGVYDIERLSSRVSFGKANPKDLLQLGHTLAKVPYIKAILEAFNSPYLDKLVNQIDTLPELEHLIRSAIDPDAPATINEGNIIRTGFDERLDHYRKVMREGTGWIADIETKERQASGISNLKIDYNKKDGYYFHVTNSNLGMVPDHFFRKATLKNSERYGTAELAKIEGQMLEAREESSSLEYDIFMRIRAQVETYIDRLQQLAKALATVDVLQSLAVVAEKNHYVRPLFNQESKIAIDNGRHAVVEKVLGVQEYIPNSISFGPQTSIQLITGPNMSGKSTYMRQLALTVIMAQIGSFVAAESASLPLFDAIFTRIGAADDLISGQSTFMVEMMEANHAIKRATPHSLILFDELGRGTATYDGMALAQSIIEYIHDRVGAKTMFATHYHELTELSTKLTKLVNVHVATLEKDGNVTFLHKIAEGPADKSYGIHVARIAGLPEDLLARADTVLTKLEAQSQARESVLSTTEVRETQQLANQQLSLFTDDGSSSEIIKRLESVDVMNLTPIQAMTVLYELKKLL.

602-609 provides a ligand contact to ATP; it reads GPNMSGKS.

The protein belongs to the DNA mismatch repair MutS family.

In terms of biological role, this protein is involved in the repair of mismatches in DNA. It is possible that it carries out the mismatch recognition step. This protein has a weak ATPase activity. This is DNA mismatch repair protein MutS from Streptococcus equi subsp. equi (strain 4047).